A 74-amino-acid polypeptide reads, in one-letter code: Tetrahydromethanopterin S-methyltransferase subunit G (74 aa).

The chain crosses the membrane as a helical span at residues 47–67 (VGIAYGLAIGFIFVYVLGTVL).

The protein belongs to the MtrG family. In terms of assembly, the complex is composed of 8 subunits; MtrA, MtrB, MtrC, MtrD, MtrE, MtrF, MtrG and MtrH.

The protein resides in the cell membrane. The enzyme catalyses 5-methyl-5,6,7,8-tetrahydromethanopterin + coenzyme M + 2 Na(+)(in) = 5,6,7,8-tetrahydromethanopterin + methyl-coenzyme M + 2 Na(+)(out). Its pathway is one-carbon metabolism; methanogenesis from CO(2); methyl-coenzyme M from 5,10-methylene-5,6,7,8-tetrahydromethanopterin: step 2/2. Its function is as follows. Part of a complex that catalyzes the formation of methyl-coenzyme M and tetrahydromethanopterin from coenzyme M and methyl-tetrahydromethanopterin. This is an energy-conserving, sodium-ion translocating step. The protein is Tetrahydromethanopterin S-methyltransferase subunit G of Methanococcus maripaludis (strain DSM 14266 / JCM 13030 / NBRC 101832 / S2 / LL).